Reading from the N-terminus, the 546-residue chain is Undecaprenyl phosphate-alpha-4-amino-4-deoxy-L-arabinose arabinosyl transferase (546 aa).

The next 12 membrane-spanning stretches (helical) occupy residues 6–26 (INLA…PLGL), 87–107 (AASA…VGRF), 113–133 (AWVT…GTYS), 177–197 (LLTK…PFMI), 208–228 (WGWW…LAIH), 260–280 (YYLP…PSAI), 289–309 (SPLL…FSAA), 313–333 (LVTY…QGII), 345–365 (IGSV…IVLF), 380–400 (PWLL…SIKA), 410–430 (YMLM…NISI), and 450–467 (AILI…NWYF).

The protein belongs to the glycosyltransferase 83 family.

The protein localises to the cell inner membrane. It catalyses the reaction 4-amino-4-deoxy-alpha-L-arabinopyranosyl di-trans,octa-cis-undecaprenyl phosphate + lipid IVA = lipid IIA + di-trans,octa-cis-undecaprenyl phosphate.. It participates in lipopolysaccharide metabolism; 4-amino-4-deoxy-beta-L-arabinose-lipid A biosynthesis. Functionally, catalyzes the transfer of the L-Ara4N moiety of the glycolipid undecaprenyl phosphate-alpha-L-Ara4N to lipid A. The modified arabinose is attached to lipid A and is required for resistance to polymyxin and cationic antimicrobial peptides. The polypeptide is Undecaprenyl phosphate-alpha-4-amino-4-deoxy-L-arabinose arabinosyl transferase (Shewanella sediminis (strain HAW-EB3)).